The following is a 247-amino-acid chain: UPF0309 protein LMOf2365_2617 (247 aa).

In terms of domain architecture, SIS spans 31-214 (VAESIENDGV…ETMVNDNFTP (184 aa)).

It belongs to the UPF0309 family.

This is UPF0309 protein LMOf2365_2617 from Listeria monocytogenes serotype 4b (strain F2365).